Here is a 358-residue protein sequence, read N- to C-terminus: U5 small nuclear ribonucleoprotein 40 kDa protein (358 aa).

Lys-18 is covalently cross-linked (Glycyl lysine isopeptide (Lys-Gly) (interchain with G-Cter in SUMO2)). Residue Arg-21 is modified to Asymmetric dimethylarginine. WD repeat units lie at residues 65 to 104, 108 to 147, 150 to 190, 192 to 231, 234 to 273, 284 to 323, and 326 to 358; these read GHEG…DNYA, GHSG…RVKR, GHTS…AIQT, QNTY…LTYT, GHAD…PKER, NFEK…ILYK, and GHAG…GEIQ. A Glycyl lysine isopeptide (Lys-Gly) (interchain with G-Cter in SUMO2) cross-link involves residue Lys-271.

Component of the pre-catalytic and catalytic spliceosome complexes. Component of the postcatalytic spliceosome P complex. Part of the U5 snRNP complex. Interacts with PRPF8. Component of the U4/U6-U5 tri-snRNP complex composed of the U4, U6 and U5 snRNAs and at least PRPF3, PRPF4, PRPF6, PRPF8, PRPF31, SNRNP200, TXNL4A, WDR57, SNRNP40, DDX23, CD2BP2, PPIH, SNU13, EFTUD2, SART1 and USP39. Component of the minor spliceosome, which splices U12-type introns.

Its subcellular location is the nucleus. Required for pre-mRNA splicing as component of the activated spliceosome. Component of the U5 small nuclear ribonucleoprotein (snRNP) complex and the U4/U6-U5 tri-snRNP complex, building blocks of the spliceosome. As a component of the minor spliceosome, involved in the splicing of U12-type introns in pre-mRNAs. The polypeptide is U5 small nuclear ribonucleoprotein 40 kDa protein (SNRNP40) (Bos taurus (Bovine)).